Here is a 63-residue protein sequence, read N- to C-terminus: Small ribosomal subunit protein eS17 (63 aa).

Belongs to the eukaryotic ribosomal protein eS17 family.

In Methanococcus aeolicus (strain ATCC BAA-1280 / DSM 17508 / OCM 812 / Nankai-3), this protein is Small ribosomal subunit protein eS17.